We begin with the raw amino-acid sequence, 96 residues long: Large ribosomal subunit protein bL25 (96 aa).

It belongs to the bacterial ribosomal protein bL25 family. Part of the 50S ribosomal subunit; part of the 5S rRNA/L5/L18/L25 subcomplex. Contacts the 5S rRNA. Binds to the 5S rRNA independently of L5 and L18.

This is one of the proteins that binds to the 5S RNA in the ribosome where it forms part of the central protuberance. In Francisella philomiragia subsp. philomiragia (strain ATCC 25017 / CCUG 19701 / FSC 153 / O#319-036), this protein is Large ribosomal subunit protein bL25.